The following is a 159-amino-acid chain: Cytochrome c-type biogenesis protein CcmE (159 aa).

The Cytoplasmic portion of the chain corresponds to 1 to 8; sequence MNPRRKTR. A helical; Signal-anchor for type II membrane protein membrane pass occupies residues 9-29; it reads LWVALTVLAGLGLTMALVLYA. Over 30–159 the chain is Periplasmic; it reads LRANIDLFYT…PPQAYKDNRP (130 aa). Heme is bound by residues His130 and Tyr134. The interval 130-159 is disordered; the sequence is HDENYTPPEVKAAMDANHTRPPQAYKDNRP.

This sequence belongs to the CcmE/CycJ family.

It localises to the cell inner membrane. Heme chaperone required for the biogenesis of c-type cytochromes. Transiently binds heme delivered by CcmC and transfers the heme to apo-cytochromes in a process facilitated by CcmF and CcmH. The polypeptide is Cytochrome c-type biogenesis protein CcmE (Cronobacter sakazakii (strain ATCC BAA-894) (Enterobacter sakazakii)).